A 66-amino-acid polypeptide reads, in one-letter code: U-scoloptoxin(04)-Ssd2a (66 aa).

The first 19 residues, 1–19, serve as a signal peptide directing secretion; sequence MKAIYILSVLLLMMLPILS.

Belongs to the scoloptoxin-04 family. In terms of processing, contains 2 disulfide bonds. In terms of tissue distribution, expressed by the venom gland.

Its subcellular location is the secreted. This Scolopendra dehaani (Thai centipede) protein is U-scoloptoxin(04)-Ssd2a.